A 435-amino-acid chain; its full sequence is Bystin (435 aa).

The segment at 1-102 (MPKFKAARGA…VPQDGSDDEE (102 aa)) is disordered. Arg-40 carries the post-translational modification Omega-N-methylarginine. Basic and acidic residues predominate over residues 71–87 (AEHGSGDRPAVPRERTT). At Ser-98 the chain carries Phosphoserine. Phosphothreonine is present on Thr-154. A phosphoserine mark is found at Ser-165 and Ser-412.

This sequence belongs to the bystin family. Binds trophinin, tastin and cytokeratins.

The protein localises to the cytoplasm. It is found in the nucleus. The protein resides in the nucleolus. Functionally, required for processing of 20S pre-rRNA precursor and biogenesis of 40S ribosomal subunits. The protein is Bystin (BYSL) of Bos taurus (Bovine).